Reading from the N-terminus, the 379-residue chain is Stimulator of interferon genes protein (379 aa).

The next 3 helical transmembrane spans lie at 20–40 (VAAF…GEPS), 87–107 (ACLG…YFYV), and 115–135 (LPLT…ILLG). S-palmitoyl cysteine attachment occurs at residues cysteine 88 and cysteine 91. The tract at residues 153–340 (FNVAHGLAWS…KHLRQEEREE (188 aa)) is cyclic dinucleotide-binding domain (CBD). 2',3'-cGAMP is bound by residues serine 162, tyrosine 167, arginine 238, and threonine 263. Residues serine 162, tyrosine 167, 238–241 (RVYT), and threonine 263 contribute to the 3',3'-c-di-GMP site. Residues tyrosine 167, arginine 238, and threonine 263 each contribute to the 2',3'-cUAMP site. The C-terminal tail (CTT) stretch occupies residues 340 to 379 (EVTMGTAGTFVAPGSSTLHQEPELLISGMDQPLPLRTDIF). Residue serine 355 is modified to Phosphoserine. Threonine 356 is modified (phosphothreonine). A pLxIS motif motif is present at residues 363–366 (LLIS). Serine 366 is modified (phosphoserine; by TBK1).

This sequence belongs to the STING family. As to quaternary structure, homodimer; forms a homodimer in absence of cyclic nucleotide (c-di-GMP or cGAMP). Homotetramer; in presence of cyclic nucleotide (c-di-GMP or cGAMP), forms tetramers and higher-order oligomers through side-by-side packing. Interacts (when phosphorylated) with IRF3; following activation and phosphorylation on the pLxIS motif by TBK1, recruits IRF3. Interacts with TBK1; when homodimer, leading to subsequent production of IFN-beta. Interacts (via transmembrane domain) with TMEM203. Phosphorylation by TBK1 leads to activation and production of IFN-beta. Following cyclic nucleotide (c-di-GMP or cGAMP)-binding, activation and translocation from the endoplasmic reticulum, STING1 is phosphorylated by TBK1 at Ser-366 in the pLxIS motif. The phosphorylated pLxIS motif constitutes an IRF3-binding motif, leading to recruitment of the transcription factor IRF3 to induce type-I interferons and other cytokines. In contrast, lacks phosphorylation site at position 358, leading to reduced production of type-I interferons and other cytokines.

The protein localises to the endoplasmic reticulum membrane. Its subcellular location is the cytoplasm. It localises to the perinuclear region. It is found in the endoplasmic reticulum-Golgi intermediate compartment membrane. The protein resides in the golgi apparatus membrane. The protein localises to the cytoplasmic vesicle. Its subcellular location is the autophagosome membrane. It localises to the mitochondrion outer membrane. It is found in the cell membrane. The catalysed reaction is H(+)(in) = H(+)(out). In terms of biological role, facilitator of innate immune signaling that acts as a sensor of cytosolic DNA from bacteria and viruses and promotes low production of type I interferon (IFN-alpha and IFN-beta). Compared to other mammals, STING1-dependent type I interferon induction is strongly reduced in bats, suggesting that the cGAS-STING pathway promotes a limited inflammatory response. Innate immune response is triggered in response to non-CpG double-stranded DNA from viruses and bacteria delivered to the cytoplasm. Acts by binding cyclic dinucleotides: recognizes and binds cyclic di-GMP (c-di-GMP), a second messenger produced by bacteria, cyclic UMP-AMP (2',3'-cUAMP), and cyclic GMP-AMP (cGAMP), a messenger produced by CGAS in response to DNA virus in the cytosol. Upon binding to c-di-GMP, cUAMP or cGAMP, STING1 oligomerizes, translocates from the endoplasmic reticulum and is phosphorylated by TBK1 on the pLxIS motif, leading to recruitment and subsequent activation of the transcription factor IRF3 to induce expression of type I interferon and exert a potent anti-viral state. In addition to promote the production of type I interferons, plays a direct role in autophagy. Following cGAMP-binding, STING1 buds from the endoplasmic reticulum into COPII vesicles, which then form the endoplasmic reticulum-Golgi intermediate compartment (ERGIC). The ERGIC serves as the membrane source for WIPI2 recruitment and LC3 lipidation, leading to formation of autophagosomes that target cytosolic DNA or DNA viruses for degradation by the lysosome. Promotes autophagy by acting as a proton channel that directs proton efflux from the Golgi to facilitate MAP1LC3B/LC3B lipidation. The autophagy- and interferon-inducing activities can be uncoupled and autophagy induction is independent of TBK1 phosphorylation. This is Stimulator of interferon genes protein from Eidolon helvum (Straw-colored fruit bat).